We begin with the raw amino-acid sequence, 195 residues long: Holliday junction branch migration complex subunit RuvA (195 aa).

The tract at residues 1–64 is domain I; the sequence is MIASIRGIIQ…EDALTLYGFS (64 aa). The domain II stretch occupies residues 65 to 142; that stretch reads DPAQRNLFEQ…DLRQLSGTTP (78 aa). Positions 143 to 151 are flexible linker; sequence GNVSTLDRE. Residues 151–195 are domain III; that stretch reads ELTDILISLGYSATEAAAAIAALPGDAPPTLEERLRLALRYFGSA.

The protein belongs to the RuvA family. As to quaternary structure, homotetramer. Forms an RuvA(8)-RuvB(12)-Holliday junction (HJ) complex. HJ DNA is sandwiched between 2 RuvA tetramers; dsDNA enters through RuvA and exits via RuvB. An RuvB hexamer assembles on each DNA strand where it exits the tetramer. Each RuvB hexamer is contacted by two RuvA subunits (via domain III) on 2 adjacent RuvB subunits; this complex drives branch migration. In the full resolvosome a probable DNA-RuvA(4)-RuvB(12)-RuvC(2) complex forms which resolves the HJ.

The protein resides in the cytoplasm. Its function is as follows. The RuvA-RuvB-RuvC complex processes Holliday junction (HJ) DNA during genetic recombination and DNA repair, while the RuvA-RuvB complex plays an important role in the rescue of blocked DNA replication forks via replication fork reversal (RFR). RuvA specifically binds to HJ cruciform DNA, conferring on it an open structure. The RuvB hexamer acts as an ATP-dependent pump, pulling dsDNA into and through the RuvAB complex. HJ branch migration allows RuvC to scan DNA until it finds its consensus sequence, where it cleaves and resolves the cruciform DNA. In Chloroflexus aurantiacus (strain ATCC 29364 / DSM 637 / Y-400-fl), this protein is Holliday junction branch migration complex subunit RuvA.